The chain runs to 372 residues: sn-glycerol-3-phosphate import ATP-binding protein UgpC (372 aa).

The ABC transporter domain maps to 2–233 (LDIQQLVKTY…PASTFVASFI (232 aa)). 35–42 (GPSGCGKS) lines the ATP pocket.

It belongs to the ABC transporter superfamily. sn-glycerol-3-phosphate importer (TC 3.A.1.1.3) family. In terms of assembly, the complex is composed of two ATP-binding proteins (UgpC), two transmembrane proteins (UgpA and UgpE) and a solute-binding protein (UgpB).

It localises to the cell inner membrane. It carries out the reaction sn-glycerol 3-phosphate(out) + ATP + H2O = sn-glycerol 3-phosphate(in) + ADP + phosphate + H(+). In terms of biological role, part of the ABC transporter complex UgpBAEC involved in sn-glycerol-3-phosphate (G3P) import. Responsible for energy coupling to the transport system. This is sn-glycerol-3-phosphate import ATP-binding protein UgpC from Vibrio vulnificus (strain CMCP6).